Consider the following 155-residue polypeptide: 3-hydroxyacyl-[acyl-carrier-protein] dehydratase FabZ (155 aa).

Residue histidine 59 is part of the active site.

Belongs to the thioester dehydratase family. FabZ subfamily.

It is found in the cytoplasm. The catalysed reaction is a (3R)-hydroxyacyl-[ACP] = a (2E)-enoyl-[ACP] + H2O. Its function is as follows. Involved in unsaturated fatty acids biosynthesis. Catalyzes the dehydration of short chain beta-hydroxyacyl-ACPs and long chain saturated and unsaturated beta-hydroxyacyl-ACPs. This chain is 3-hydroxyacyl-[acyl-carrier-protein] dehydratase FabZ, found in Bartonella henselae (strain ATCC 49882 / DSM 28221 / CCUG 30454 / Houston 1) (Rochalimaea henselae).